The chain runs to 220 residues: Ribonuclease P protein subunit p29 (220 aa).

At S10 the chain carries Phosphoserine.

It belongs to the eukaryotic/archaeal RNase P protein component 1 family. In terms of assembly, component of nuclear RNase P and RNase MRP ribonucleoproteins. RNase P consists of a catalytic RNA moiety and 10 different protein chains; POP1, POP4, POP5, POP7, RPP14, RPP21, RPP25, RPP30, RPP38 and RPP40. Within the RNase P complex, POP1, POP7 and RPP25 form the 'finger' subcomplex, POP5, RPP14, RPP40 and homodimeric RPP30 form the 'palm' subcomplex, and RPP21, POP4 and RPP38 form the 'wrist' subcomplex. All subunits of the RNase P complex interact with the catalytic RNA. Several subunits of RNase P are also part of the RNase MRP complex. RNase MRP consists of a catalytic RNA moiety and about 8 protein subunits; POP1, POP7, RPP25, RPP30, RPP38, RPP40 and possibly also POP4 and POP5.

The protein localises to the nucleus. The protein resides in the nucleolus. Functionally, component of ribonuclease P, a ribonucleoprotein complex that generates mature tRNA molecules by cleaving their 5'-ends. In Pongo abelii (Sumatran orangutan), this protein is Ribonuclease P protein subunit p29 (POP4).